A 117-amino-acid chain; its full sequence is Large ribosomal subunit protein uL18 (117 aa).

Belongs to the universal ribosomal protein uL18 family. As to quaternary structure, part of the 50S ribosomal subunit; part of the 5S rRNA/L5/L18/L25 subcomplex. Contacts the 5S and 23S rRNAs.

Its function is as follows. This is one of the proteins that bind and probably mediate the attachment of the 5S RNA into the large ribosomal subunit, where it forms part of the central protuberance. This Photobacterium profundum (strain SS9) protein is Large ribosomal subunit protein uL18.